A 258-amino-acid polypeptide reads, in one-letter code: Indole-3-glycerol phosphate synthase (258 aa).

This sequence belongs to the TrpC family.

The catalysed reaction is 1-(2-carboxyphenylamino)-1-deoxy-D-ribulose 5-phosphate + H(+) = (1S,2R)-1-C-(indol-3-yl)glycerol 3-phosphate + CO2 + H2O. Its pathway is amino-acid biosynthesis; L-tryptophan biosynthesis; L-tryptophan from chorismate: step 4/5. The polypeptide is Indole-3-glycerol phosphate synthase (Geobacillus kaustophilus (strain HTA426)).